Reading from the N-terminus, the 439-residue chain is Beta-1,3-galactosyl-O-glycosyl-glycoprotein beta-1,6-N-acetylglucosaminyltransferase (439 aa).

The Cytoplasmic segment spans residues 1 to 11 (MVGWKKKKLCR). A helical; Signal-anchor for type II membrane protein transmembrane segment spans residues 12–29 (GHHLWVLGCYMLLAVVSL). Residues 30–439 (RLSLRFKCDV…RHKAIYGTEL (410 aa)) lie on the Lumenal side of the membrane. Residues asparagine 71 and asparagine 107 are each glycosylated (N-linked (GlcNAc...) asparagine; by host). Disulfide bonds link cysteine 72/cysteine 229, cysteine 163/cysteine 383, cysteine 184/cysteine 211, and cysteine 392/cysteine 424.

Belongs to the glycosyltransferase 14 family.

The protein resides in the host Golgi apparatus membrane. The catalysed reaction is a 3-O-[beta-D-galactosyl-(1-&gt;3)-N-acetyl-alpha-D-galactosaminyl]-L-seryl-[protein] + UDP-N-acetyl-alpha-D-glucosamine = 3-O-{beta-D-galactosyl-(1-&gt;3)-[N-acetyl-beta-D-glucosaminyl-(1-&gt;6)]-N-acetyl-alpha-D-galactosaminyl}-L-seryl-[protein] + UDP + H(+). The enzyme catalyses a 3-O-[beta-D-galactosyl-(1-&gt;3)-N-acetyl-alpha-D-galactosaminyl]-L-threonyl-[protein] + UDP-N-acetyl-alpha-D-glucosamine = a 3-O-{beta-D-galactosyl-(1-&gt;3)-[N-acetyl-beta-D-glucosaminyl-(1-&gt;6)]-N-acetyl-alpha-D-galactosaminyl}-L-threonyl-[protein] + UDP + H(+). It carries out the reaction a beta-D-Gal-(1-&gt;4)-beta-D-GlcNAc-(1-&gt;3)-beta-D-Gal-(1-&gt;4)-beta-D-GlcNAc derivative + UDP-N-acetyl-alpha-D-glucosamine = a beta-D-Gal-(1-&gt;4)-beta-D-GlcNAc-(1-&gt;3)-[beta-D-GlcNAc-(1-&gt;6)]-beta-D-Gal-(1-&gt;4)-N-acetyl-beta-D-glucosaminyl derivative + UDP + H(+). It catalyses the reaction 3-O-[N-acetyl-beta-D-glucosaminyl-(1-&gt;3)-N-acetyl-alpha-D-galactosaminyl]-L-seryl-[protein] + UDP-N-acetyl-alpha-D-glucosamine = 3-O-[N-acetyl-beta-D-glucosaminyl-(1-&gt;3)-[N-acetyl-beta-D-glucosaminyl-(1-&gt;6)]-N-acetyl-alpha-D-galactosaminyl]-L-seryl-[protein] + UDP + H(+). The catalysed reaction is a 3-O-[N-acetyl-beta-D-glucosaminyl-(1-&gt;3)-N-acetyl-alpha-D-galactosaminyl]-L-threonyl-[protein] + UDP-N-acetyl-alpha-D-glucosamine = 3-O-[N-acetyl-beta-D-glucosaminyl-(1-&gt;3)-[N-acetyl-beta-D-glucosaminyl-(1-&gt;6)]-N-acetyl-alpha-D-galactosaminyl]-L-threonyl-[protein] + UDP + H(+). Its pathway is protein modification; protein glycosylation. Its function is as follows. Non-essential glycosyltransferase that can synthesize all known mucin beta 6 N-acetylglucosaminides. Mediates core 2 and core 4 O-glycan branching, 2 important steps in mucin-type biosynthesis. Has also I-branching enzyme activity by converting linear into branched poly-N-acetyllactosaminoglycans. Contributes to the post-translational modifications of structural proteins. This Bovine herpesvirus 4 (BoHV-4) protein is Beta-1,3-galactosyl-O-glycosyl-glycoprotein beta-1,6-N-acetylglucosaminyltransferase (Bo17).